The sequence spans 495 residues: Probable cobyric acid synthase (495 aa).

The GATase cobBQ-type domain maps to 256–441 (DVDIAVIRLT…LHGLFDNVNI (186 aa)). The active-site Nucleophile is Cys-334. The active site involves His-433.

This sequence belongs to the CobB/CobQ family. CobQ subfamily.

The protein operates within cofactor biosynthesis; adenosylcobalamin biosynthesis. In terms of biological role, catalyzes amidations at positions B, D, E, and G on adenosylcobyrinic A,C-diamide. NH(2) groups are provided by glutamine, and one molecule of ATP is hydrogenolyzed for each amidation. This chain is Probable cobyric acid synthase, found in Methanococcoides burtonii (strain DSM 6242 / NBRC 107633 / OCM 468 / ACE-M).